The following is a 304-amino-acid chain: HPr kinase/phosphorylase (304 aa).

Catalysis depends on residues H136 and K157. An ATP-binding site is contributed by 151 to 158 (GESGIGKS). S158 is a Mg(2+) binding site. D175 (proton acceptor; for phosphorylation activity. Proton donor; for dephosphorylation activity) is an active-site residue. Residues 198 to 207 (LEVRGIGIID) form an important for the catalytic mechanism of both phosphorylation and dephosphorylation region. Mg(2+) is bound at residue E199. R240 is a catalytic residue. Residues 261–266 (PVRPGR) form an important for the catalytic mechanism of dephosphorylation region.

The protein belongs to the HPrK/P family. As to quaternary structure, homohexamer. Mg(2+) serves as cofactor.

The enzyme catalyses [HPr protein]-L-serine + ATP = [HPr protein]-O-phospho-L-serine + ADP + H(+). The catalysed reaction is [HPr protein]-O-phospho-L-serine + phosphate + H(+) = [HPr protein]-L-serine + diphosphate. Functionally, catalyzes the ATP- as well as the pyrophosphate-dependent phosphorylation of a specific serine residue in HPr, a phosphocarrier protein of the phosphoenolpyruvate-dependent sugar phosphotransferase system (PTS). HprK/P also catalyzes the pyrophosphate-producing, inorganic phosphate-dependent dephosphorylation (phosphorolysis) of seryl-phosphorylated HPr (P-Ser-HPr). The two antagonistic activities of HprK/P are regulated by several intracellular metabolites, which change their concentration in response to the absence or presence of rapidly metabolisable carbon sources (glucose, fructose, etc.) in the growth medium. Therefore, by controlling the phosphorylation state of HPr, HPrK/P is a sensor enzyme that plays a major role in the regulation of carbon metabolism and sugar transport: it mediates carbon catabolite repression (CCR), and regulates PTS-catalyzed carbohydrate uptake and inducer exclusion. This chain is HPr kinase/phosphorylase, found in Clostridium botulinum (strain Alaska E43 / Type E3).